The following is a 210-amino-acid chain: MAKNKFSKDWIHQHINDPYVKLAQQKGYRARAAFKLLEILDAEKLMRRGDVVVDLGSAPGSWSQVARERLAGPGGVVDGRIIALDLLPMEPVAGVEFIQGDFREEEVLEQLARMVDGQPVDLVISDMAPNLSGVGVADSARIQHVCELALEFACAHLKPNGALIVKAFHGSGFSQIVQSYKQRFKRVVERKPKASRDKSSETFLVARDLK.

S-adenosyl-L-methionine contacts are provided by glycine 60, tryptophan 62, aspartate 85, aspartate 101, and aspartate 126. Lysine 166 serves as the catalytic Proton acceptor.

The protein belongs to the class I-like SAM-binding methyltransferase superfamily. RNA methyltransferase RlmE family.

The protein resides in the cytoplasm. The catalysed reaction is uridine(2552) in 23S rRNA + S-adenosyl-L-methionine = 2'-O-methyluridine(2552) in 23S rRNA + S-adenosyl-L-homocysteine + H(+). Specifically methylates the uridine in position 2552 of 23S rRNA at the 2'-O position of the ribose in the fully assembled 50S ribosomal subunit. The sequence is that of Ribosomal RNA large subunit methyltransferase E from Bordetella pertussis (strain Tohama I / ATCC BAA-589 / NCTC 13251).